The following is a 1112-amino-acid chain: Mediator of RNA polymerase II transcription subunit 14 (1112 aa).

Belongs to the Mediator complex subunit 14 family. In terms of assembly, component of the Mediator complex.

Its subcellular location is the nucleus. Its function is as follows. Component of the Mediator complex, a coactivator involved in the regulated transcription of nearly all RNA polymerase II-dependent genes. Mediator functions as a bridge to convey information from gene-specific regulatory proteins to the basal RNA polymerase II transcription machinery. Mediator is recruited to promoters by direct interactions with regulatory proteins and serves as a scaffold for the assembly of a functional preinitiation complex with RNA polymerase II and the general transcription factors. In Scheffersomyces stipitis (strain ATCC 58785 / CBS 6054 / NBRC 10063 / NRRL Y-11545) (Yeast), this protein is Mediator of RNA polymerase II transcription subunit 14 (RGR1).